Consider the following 461-residue polypeptide: Alpha-tubulin N-acetyltransferase 1 (461 aa).

Residues 2–189 form the N-acetyltransferase domain; the sequence is VEFRFDIKPL…NNFVLYEGFF (188 aa). Residues 123-136 and 159-168 contribute to the acetyl-CoA site; these read FYVHESRQRAGLGK and SEKLLSFLSK. Disordered stretches follow at residues 196–295, 314–362, and 418–443; these read NGGG…GNHD, NSYE…PEVA, and RPPGHEVTSPGQDNTDAMSTVSSGGG. Positions 233-254 are enriched in polar residues; it reads RRGSQQQTTPNARLQQITQISP. Positions 283–293 are enriched in low complexity; that stretch reads GSAEANSGNGN. Over residues 318-336 the composition is skewed to acidic residues; that stretch reads PEPEVEPEPEPEPEPEPEP. Pro residues predominate over residues 339-356; that stretch reads ITPPSPPPKSHTPTPPSV. The span at 426-439 shows a compositional bias: polar residues; that stretch reads SPGQDNTDAMSTVS.

It belongs to the acetyltransferase ATAT1 family.

It carries out the reaction L-lysyl-[alpha-tubulin] + acetyl-CoA = N(6)-acetyl-L-lysyl-[alpha-tubulin] + CoA + H(+). In terms of biological role, specifically acetylates 'Lys-40' in alpha-tubulin on the lumenal side of microtubules. Promotes microtubule destabilization and accelerates microtubule dynamics; this activity may be independent of acetylation activity. Acetylates alpha-tubulin with a slow enzymatic rate, due to a catalytic site that is not optimized for acetyl transfer. Enters the microtubule through each end and diffuses quickly throughout the lumen of microtubules. Acetylates only long/old microtubules because of its slow acetylation rate since it does not have time to act on dynamically unstable microtubules before the enzyme is released. Acetylates central spindle microtubules. This Drosophila melanogaster (Fruit fly) protein is Alpha-tubulin N-acetyltransferase 1.